A 648-amino-acid chain; its full sequence is TBC1 domain family member 17 (648 aa).

The interval 218-309 (DPYSTTFSSF…PELKNRIFSG (92 aa)) is required for interaction with OPTN. Residues 240-259 (PQPEGAASDLPPPPDDEPEP) are disordered. The region spanning 310–520 (GLSPSLRREA…RLWEVLWTGL (211 aa)) is the Rab-GAP TBC domain. The interval 594 to 648 (LAPPAEPHSPSPTASPLPLSPTRAPPTPPPSTDTAPQPDSSLEILPEEEDEGADS) is disordered. The segment covering 597-624 (PAEPHSPSPTASPLPLSPTRAPPTPPPS) has biased composition (pro residues). Ser-602 and Ser-604 each carry phosphoserine. At Thr-606 the chain carries Phosphothreonine. The residue at position 608 (Ser-608) is a Phosphoserine. The residue at position 615 (Thr-615) is a Phosphothreonine. Residues 625-634 (TDTAPQPDSS) show a composition bias toward low complexity. Positions 638–648 (LPEEEDEGADS) are enriched in acidic residues.

As to quaternary structure, interacts with OPTN; this interaction mediates TBC1D17 transient association with Rab8.

It localises to the cytoplasmic vesicle. Its subcellular location is the autophagosome. The protein resides in the cytoplasm. It is found in the recycling endosome. Functionally, probable RAB GTPase-activating protein that inhibits RAB8A/B function. Reduces Rab8 recruitment to tubules emanating from the endocytic recycling compartment (ERC) and inhibits Rab8-mediated endocytic trafficking, such as that of transferrin receptor (TfR). Involved in regulation of autophagy. The polypeptide is TBC1 domain family member 17 (Homo sapiens (Human)).